The following is a 212-amino-acid chain: Probable GTP-binding protein EngB (212 aa).

The 173-residue stretch at 40-212 (SLPEIAFVGK…KASLAKCIKA (173 aa)) folds into the EngB-type G domain. GTP-binding positions include 48–55 (GKSNVGKS), 75–79 (GRTRQ), 93–96 (DLPG), 160–163 (TKSD), and 191–193 (VSS). Mg(2+) contacts are provided by S55 and T77.

It belongs to the TRAFAC class TrmE-Era-EngA-EngB-Septin-like GTPase superfamily. EngB GTPase family. It depends on Mg(2+) as a cofactor.

Its function is as follows. Necessary for normal cell division and for the maintenance of normal septation. In Rickettsia akari (strain Hartford), this protein is Probable GTP-binding protein EngB.